A 398-amino-acid polypeptide reads, in one-letter code: Polyferredoxin protein VhuB (398 aa).

11 4Fe-4S ferredoxin-type domains span residues 2 to 31 (AGIKIQEDACLVCNACSKACPTEAIEIAPF), 25 to 53 (AIEIAPFKTCTLCFSCASACPTGALVENN), 54 to 83 (GKLIYNSSKCIKCGNCATACPTGIKKVDDR), 82 to 111 (DRFPYSKGHCVLCEKCVDACPIDIISIPGK), 123 to 152 (QEPIKVTEACVGCSECVPVCPVDAISIEDE), 152 to 181 (ELAVIDTEKCIYCSVCAQTCPWNAIYVAGK), 191 to 219 (KSFTVTEECIGCEKCVEVCPGDMITYNRE), 220 to 249 (DLIVKLPEACPACHLCEQNCPVDAISLEVE), 259 to 291 (EGLVWYEDKCNYCGPCAIKCPLCPTNAINMINQ), 300 to 331 (TKTDKDPEFRMCIRCGACVMKCPTGALKMGKI), and 339 to 368 (NRIEFSPALCNECGECVDVCPQDTLKLTGD). [4Fe-4S] cluster is bound by residues cysteine 11, cysteine 14, cysteine 17, cysteine 21, cysteine 34, cysteine 37, cysteine 40, cysteine 44, cysteine 63, cysteine 66, cysteine 69, cysteine 73, cysteine 91, cysteine 94, cysteine 97, cysteine 101, cysteine 132, cysteine 135, cysteine 138, cysteine 142, cysteine 161, cysteine 164, cysteine 167, cysteine 171, cysteine 199, cysteine 202, cysteine 205, cysteine 209, cysteine 229, cysteine 232, cysteine 235, cysteine 239, cysteine 268, cysteine 271, cysteine 274, cysteine 278, cysteine 311, cysteine 314, cysteine 317, cysteine 321, cysteine 348, cysteine 351, cysteine 354, cysteine 358, cysteine 377, cysteine 380, cysteine 383, and cysteine 387.

Requires [4Fe-4S] cluster as cofactor.

The protein is Polyferredoxin protein VhuB (vhuB) of Methanococcus voltae.